A 517-amino-acid chain; its full sequence is Crotonobetaine/carnitine--CoA ligase (517 aa).

The protein belongs to the ATP-dependent AMP-binding enzyme family.

The enzyme catalyses 4-(trimethylamino)butanoate + ATP + CoA = 4-(trimethylamino)butanoyl-CoA + AMP + diphosphate. The catalysed reaction is crotonobetaine + ATP + CoA = crotonobetainyl-CoA + AMP + diphosphate. It catalyses the reaction (R)-carnitine + ATP + CoA = (R)-carnitinyl-CoA + AMP + diphosphate. The protein operates within amine and polyamine metabolism; carnitine metabolism. Its function is as follows. Catalyzes the transfer of CoA to carnitine, generating the initial carnitinyl-CoA needed for the CaiB reaction cycle. Also has activity toward crotonobetaine and gamma-butyrobetaine. The chain is Crotonobetaine/carnitine--CoA ligase from Escherichia coli O45:K1 (strain S88 / ExPEC).